A 330-amino-acid polypeptide reads, in one-letter code: DNA primase small subunit PriS (330 aa).

Catalysis depends on residues Asp-101 and Asp-103. Zn(2+)-binding residues include Cys-116, Cys-119, Cys-128, and Asp-131. Asp-235 is a catalytic residue.

The protein belongs to the eukaryotic-type primase small subunit family. In terms of assembly, heterodimer of a small subunit (PriS) and a large subunit (PriL). Mg(2+) serves as cofactor. Mn(2+) is required as a cofactor.

In terms of biological role, catalytic subunit of DNA primase, an RNA polymerase that catalyzes the synthesis of short RNA molecules used as primers for DNA polymerase during DNA replication. The small subunit contains the primase catalytic core and has DNA synthesis activity on its own. Binding to the large subunit stabilizes and modulates the activity, increasing the rate of DNA synthesis while decreasing the length of the DNA fragments, and conferring RNA synthesis capability. The DNA polymerase activity may enable DNA primase to also catalyze primer extension after primer synthesis. May also play a role in DNA repair. The chain is DNA primase small subunit PriS from Saccharolobus islandicus (strain M.16.27) (Sulfolobus islandicus).